A 142-amino-acid chain; its full sequence is Protein SprT-like (142 aa).

Residues 4-138 enclose the SprT-like domain; that stretch reads YVKKVSIEDF…FACGYCHGRL (135 aa). Zn(2+) is bound at residue histidine 62. Glutamate 63 is a catalytic residue. Histidine 66 serves as a coordination point for Zn(2+).

Belongs to the SprT family. It depends on Zn(2+) as a cofactor.

The protein localises to the cytoplasm. This chain is Protein SprT-like, found in Streptococcus agalactiae serotype Ia (strain ATCC 27591 / A909 / CDC SS700).